Consider the following 217-residue polypeptide: Uridylate kinase (217 aa).

Position 6–10 (6–10 (KLSGR)) interacts with ATP. Residue G38 participates in UMP binding. ATP is bound by residues G39 and R43. UMP is bound by residues D60 and 107-113 (FQPGQST). ATP-binding residues include N134, Y139, and D142.

Belongs to the UMP kinase family. Homohexamer.

It localises to the cytoplasm. It catalyses the reaction UMP + ATP = UDP + ADP. The protein operates within pyrimidine metabolism; CTP biosynthesis via de novo pathway; UDP from UMP (UMPK route): step 1/1. Its activity is regulated as follows. Inhibited by UTP. Catalyzes the reversible phosphorylation of UMP to UDP. This Pyrobaculum neutrophilum (strain DSM 2338 / JCM 9278 / NBRC 100436 / V24Sta) (Thermoproteus neutrophilus) protein is Uridylate kinase.